We begin with the raw amino-acid sequence, 342 residues long: Flap endonuclease 1 (342 aa).

Residues 1 to 99 (MGVKIGELIE…RAIEERVRAR (99 aa)) form an N-domain region. Mg(2+) is bound by residues Asp28, Asp81, Glu153, Glu155, Asp174, Asp176, and Asp237. Residues 117 to 259 (EARKYAQAAL…RALELVKKYK (143 aa)) form an I-domain region.

The protein belongs to the XPG/RAD2 endonuclease family. FEN1 subfamily. As to quaternary structure, interacts with PCNA. PCNA stimulates the nuclease activity without altering cleavage specificity. Mg(2+) is required as a cofactor.

Structure-specific nuclease with 5'-flap endonuclease and 5'-3' exonuclease activities involved in DNA replication and repair. During DNA replication, cleaves the 5'-overhanging flap structure that is generated by displacement synthesis when DNA polymerase encounters the 5'-end of a downstream Okazaki fragment. Binds the unpaired 3'-DNA end and kinks the DNA to facilitate 5' cleavage specificity. Cleaves one nucleotide into the double-stranded DNA from the junction in flap DNA, leaving a nick for ligation. Also involved in the base excision repair (BER) pathway. Acts as a genome stabilization factor that prevents flaps from equilibrating into structures that lead to duplications and deletions. Also possesses 5'-3' exonuclease activity on nicked or gapped double-stranded DNA. This chain is Flap endonuclease 1, found in Korarchaeum cryptofilum (strain OPF8).